The chain runs to 156 residues: Small ribosomal subunit protein uS7 (156 aa).

The protein belongs to the universal ribosomal protein uS7 family. As to quaternary structure, part of the 30S ribosomal subunit. Contacts proteins S9 and S11.

In terms of biological role, one of the primary rRNA binding proteins, it binds directly to 16S rRNA where it nucleates assembly of the head domain of the 30S subunit. Is located at the subunit interface close to the decoding center, probably blocks exit of the E-site tRNA. In Erwinia tasmaniensis (strain DSM 17950 / CFBP 7177 / CIP 109463 / NCPPB 4357 / Et1/99), this protein is Small ribosomal subunit protein uS7.